We begin with the raw amino-acid sequence, 727 residues long: 1,4-alpha-glucan branching enzyme GlgB (727 aa).

The active-site Nucleophile is aspartate 405. Glutamate 458 serves as the catalytic Proton donor.

This sequence belongs to the glycosyl hydrolase 13 family. GlgB subfamily. In terms of assembly, monomer.

It carries out the reaction Transfers a segment of a (1-&gt;4)-alpha-D-glucan chain to a primary hydroxy group in a similar glucan chain.. The protein operates within glycan biosynthesis; glycogen biosynthesis. Functionally, catalyzes the formation of the alpha-1,6-glucosidic linkages in glycogen by scission of a 1,4-alpha-linked oligosaccharide from growing alpha-1,4-glucan chains and the subsequent attachment of the oligosaccharide to the alpha-1,6 position. This is 1,4-alpha-glucan branching enzyme GlgB from Yersinia pseudotuberculosis serotype I (strain IP32953).